A 255-amino-acid chain; its full sequence is Imidazole glycerol phosphate synthase subunit HisF (255 aa).

Catalysis depends on residues D11 and D130.

This sequence belongs to the HisA/HisF family. As to quaternary structure, heterodimer of HisH and HisF.

Its subcellular location is the cytoplasm. The catalysed reaction is 5-[(5-phospho-1-deoxy-D-ribulos-1-ylimino)methylamino]-1-(5-phospho-beta-D-ribosyl)imidazole-4-carboxamide + L-glutamine = D-erythro-1-(imidazol-4-yl)glycerol 3-phosphate + 5-amino-1-(5-phospho-beta-D-ribosyl)imidazole-4-carboxamide + L-glutamate + H(+). It participates in amino-acid biosynthesis; L-histidine biosynthesis; L-histidine from 5-phospho-alpha-D-ribose 1-diphosphate: step 5/9. Its function is as follows. IGPS catalyzes the conversion of PRFAR and glutamine to IGP, AICAR and glutamate. The HisF subunit catalyzes the cyclization activity that produces IGP and AICAR from PRFAR using the ammonia provided by the HisH subunit. In Synechococcus sp. (strain ATCC 27144 / PCC 6301 / SAUG 1402/1) (Anacystis nidulans), this protein is Imidazole glycerol phosphate synthase subunit HisF.